The sequence spans 233 residues: Glyceraldehyde 3-phosphate phosphatase (233 aa).

Belongs to the HAD-like hydrolase superfamily. The cofactor is Mg(2+).

Catalyzes the dephosphorylation of D,L-glyceraldehyde 3-phosphate in vitro. The polypeptide is Glyceraldehyde 3-phosphate phosphatase (Methanopyrus kandleri (strain AV19 / DSM 6324 / JCM 9639 / NBRC 100938)).